Consider the following 580-residue polypeptide: Efflux pump dotC (580 aa).

A compositionally biased stretch (basic and acidic residues) spans 1-34 (MSEDHTKADNLSEKDPHSPERSDSSSHEDAHARE). Residues 1 to 45 (MSEDHTKADNLSEKDPHSPERSDSSSHEDAHAREEEESSDDDGAL) form a disordered region. Asn-10 carries an N-linked (GlcNAc...) asparagine glycan. Positions 35–44 (EEESSDDDGA) are enriched in acidic residues. Residues 49–69 (PASLIAIVMIALSLAVFLSAL) form a helical membrane-spanning segment. Asn-86 is a glycosylation site (N-linked (GlcNAc...) asparagine). A run of 13 helical transmembrane segments spans residues 89 to 109 (AAYT…TPIW), 127 to 147 (ALFM…MLIT), 153 to 173 (GAAG…LFSL), 181 to 201 (GMIG…GGAF), 209 to 229 (WCFY…FFFL), 242 to 262 (FAAI…MFLF), 275 to 295 (SATV…FGLV), 318 to 338 (ALLV…YLPL), 348 to 368 (PILA…SAAA), 380 to 400 (LIPM…LINF), 409 to 429 (LIIY…APLV), 444 to 466 (TATF…QVLY), and 519 to 539 (SPMW…ILLV). The segment at 559 to 580 (KKAEAERKAERQAKDLEKAQKS) is disordered.

It belongs to the major facilitator superfamily. TCR/Tet family.

The protein resides in the cell membrane. Its subcellular location is the vacuole membrane. In terms of biological role, efflux pump; part of the gene cluster that mediates the biosynthesis of dothistromin (DOTH), a polyketide toxin very similar in structure to the aflatoxin precursor, versicolorin B. One function of dotC may be to transport early-stage dothistromin biosynthetic intermediates from the cytoplasm into vacuoles, thereby affecting the rate of dothistromin production. In Dothistroma septosporum (strain NZE10 / CBS 128990) (Red band needle blight fungus), this protein is Efflux pump dotC.